A 220-amino-acid chain; its full sequence is Ribosomal RNA small subunit methyltransferase G (220 aa).

S-adenosyl-L-methionine contacts are provided by residues G82, L87, 137 to 138 (VE), and R152.

This sequence belongs to the methyltransferase superfamily. RNA methyltransferase RsmG family.

It localises to the cytoplasm. It catalyses the reaction guanosine(527) in 16S rRNA + S-adenosyl-L-methionine = N(7)-methylguanosine(527) in 16S rRNA + S-adenosyl-L-homocysteine. Specifically methylates the N7 position of guanine in position 527 of 16S rRNA. This is Ribosomal RNA small subunit methyltransferase G from Janthinobacterium sp. (strain Marseille) (Minibacterium massiliensis).